A 526-amino-acid polypeptide reads, in one-letter code: tRNA (guanine(26)-N(2))-dimethyltransferase (526 aa).

The span at 1 to 10 (MTENVNSSGD) shows a compositional bias: polar residues. A disordered region spans residues 1-20 (MTENVNSSGDSAIKSEDKEE). One can recognise a Trm1 methyltransferase domain in the interval 22 to 441 (TVIQEGQAKV…APMHLLWDIY (420 aa)). S-adenosyl-L-methionine contacts are provided by Arg47, Arg104, and Asp122. Zn(2+)-binding residues include Cys286, Cys289, Cys325, and Cys328. The interval 498-526 (KGKNWGPRQKAKGSVNSTKAGFQLTEHKE) is disordered.

The protein belongs to the class I-like SAM-binding methyltransferase superfamily. Trm1 family.

It catalyses the reaction guanosine(26) in tRNA + 2 S-adenosyl-L-methionine = N(2)-dimethylguanosine(26) in tRNA + 2 S-adenosyl-L-homocysteine + 2 H(+). Its function is as follows. Dimethylates a single guanine residue at position 26 of most tRNAs using S-adenosyl-L-methionine as donor of the methyl groups. The protein is tRNA (guanine(26)-N(2))-dimethyltransferase (trm-1) of Caenorhabditis elegans.